A 483-amino-acid polypeptide reads, in one-letter code: Acyl-coenzyme A thioesterase 2, mitochondrial (483 aa).

Lysine 104 is subject to N6-acetyllysine. Catalysis depends on charge relay system residues serine 294, aspartate 388, and histidine 422. Lysine 470 carries the post-translational modification N6-succinyllysine. The short motif at 481–483 (SKV) is the Microbody targeting signal element.

It belongs to the C/M/P thioester hydrolase family. In terms of assembly, monomer. In terms of tissue distribution, strongest expression in heart, liver, muscle and kidney. Weak in placenta and pancreas.

It is found in the mitochondrion. It catalyses the reaction hexadecanoyl-CoA + H2O = hexadecanoate + CoA + H(+). The enzyme catalyses tetradecanoyl-CoA + H2O = tetradecanoate + CoA + H(+). The catalysed reaction is octadecanoyl-CoA + H2O = octadecanoate + CoA + H(+). It carries out the reaction eicosanoyl-CoA + H2O = eicosanoate + CoA + H(+). It catalyses the reaction decanoyl-CoA + H2O = decanoate + CoA + H(+). The enzyme catalyses dodecanoyl-CoA + H2O = dodecanoate + CoA + H(+). The catalysed reaction is (9Z)-octadecenoyl-CoA + H2O = (9Z)-octadecenoate + CoA + H(+). It carries out the reaction (9Z)-hexadecenoyl-CoA + H2O = (9Z)-hexadecenoate + CoA + H(+). It catalyses the reaction (9E)-octadecenoyl-CoA + H2O = (9E)-octadecenoate + CoA + H(+). The enzyme catalyses (9Z,12Z)-octadecadienoyl-CoA + H2O = (9Z,12Z)-octadecadienoate + CoA + H(+). It participates in lipid metabolism; fatty acid metabolism. Its function is as follows. Catalyzes the hydrolysis of acyl-CoAs into free fatty acids and coenzyme A (CoASH), regulating their respective intracellular levels. Displays higher activity toward long chain acyl CoAs (C14-C20). The enzyme is involved in enhancing the hepatic fatty acid oxidation in mitochondria. This is Acyl-coenzyme A thioesterase 2, mitochondrial (ACOT2) from Homo sapiens (Human).